The primary structure comprises 367 residues: Mitogen-activated protein kinase 12 (367 aa).

Positions 27 to 311 (YQDLQPVGSG…AAEALTHPYF (285 aa)) constitute a Protein kinase domain. ATP is bound by residues 33-41 (VGSGAYGAV) and Lys-56. Residue Asp-153 is the Proton acceptor of the active site. Thr-183 carries the phosphothreonine modification. The TXY signature appears at 183 to 185 (TGY). Phosphotyrosine is present on Tyr-185.

It belongs to the protein kinase superfamily. CMGC Ser/Thr protein kinase family. MAP kinase subfamily. Monomer. Interacts with the PDZ domain of the syntrophin SNTA1. Interacts with SH3BP5, LIN7C, SCRIB and SYNJ2BP. Interacts with PTPN4; this interaction induces the activation of PTPN4 phosphatase activity. The cofactor is Mg(2+). In terms of processing, dually phosphorylated on Thr-183 and Tyr-185 by MAP2K3/MKK3 and MAP2K6/MKK6, which activates the enzyme. Post-translationally, ubiquitinated. Ubiquitination leads to degradation by the proteasome pathway. Highly expressed in skeletal muscle. Also expressed in the heart, particularly in cardiac myocytes, lung, thymus and testes.

The protein resides in the cytoplasm. The protein localises to the nucleus. Its subcellular location is the mitochondrion. It catalyses the reaction L-seryl-[protein] + ATP = O-phospho-L-seryl-[protein] + ADP + H(+). It carries out the reaction L-threonyl-[protein] + ATP = O-phospho-L-threonyl-[protein] + ADP + H(+). Activated by phosphorylation on threonine and tyrosine. MAP2K3/MKK3 and MAP2K6/MKK6 are both essential for the activation of MAPK12 induced by environmental stress, whereas MAP2K6/MKK6 is the major MAPK12 activator in response to TNF-alpha. Serine/threonine kinase which acts as an essential component of the MAP kinase signal transduction pathway. MAPK12 is one of the four p38 MAPKs which play an important role in the cascades of cellular responses evoked by extracellular stimuli such as pro-inflammatory cytokines or physical stress leading to direct activation of transcription factors such as ELK1 and ATF2. Accordingly, p38 MAPKs phosphorylate a broad range of proteins and it has been estimated that they may have approximately 200 to 300 substrates each. Some of the targets are downstream kinases such as MAPKAPK2, which are activated through phosphorylation and further phosphorylate additional targets. Plays a role in myoblast differentiation and also in the down-regulation of cyclin D1 in response to hypoxia in adrenal cells suggesting MAPK12 may inhibit cell proliferation while promoting differentiation. Phosphorylates DLG1. Following osmotic shock, MAPK12 in the cell nucleus increases its association with nuclear DLG1, thereby causing dissociation of DLG1-SFPQ complexes. This function is independent of its catalytic activity and could affect mRNA processing and/or gene transcription to aid cell adaptation to osmolarity changes in the environment. Regulates UV-induced checkpoint signaling and repair of UV-induced DNA damage and G2 arrest after gamma-radiation exposure. MAPK12 is involved in the regulation of SLC2A1 expression and basal glucose uptake in L6 myotubes; and negatively regulates SLC2A4 expression and contraction-mediated glucose uptake in adult skeletal muscle. C-Jun (JUN) phosphorylation is stimulated by MAPK14 and inhibited by MAPK12, leading to a distinct AP-1 regulation. MAPK12 is required for the normal kinetochore localization of PLK1, prevents chromosomal instability and supports mitotic cell viability. MAPK12-signaling is also positively regulating the expansion of transient amplifying myogenic precursor cells during muscle growth and regeneration. The polypeptide is Mitogen-activated protein kinase 12 (Mapk12) (Mus musculus (Mouse)).